A 184-amino-acid chain; its full sequence is NADH-quinone oxidoreductase subunit B (184 aa).

[4Fe-4S] cluster is bound by residues Cys-37, Cys-38, Cys-103, and Cys-132.

The protein belongs to the complex I 20 kDa subunit family. NDH-1 is composed of 14 different subunits. Subunits NuoB, C, D, E, F, and G constitute the peripheral sector of the complex. Requires [4Fe-4S] cluster as cofactor.

The protein resides in the cell membrane. It carries out the reaction a quinone + NADH + 5 H(+)(in) = a quinol + NAD(+) + 4 H(+)(out). In terms of biological role, NDH-1 shuttles electrons from NADH, via FMN and iron-sulfur (Fe-S) centers, to quinones in the respiratory chain. The immediate electron acceptor for the enzyme in this species is believed to be a menaquinone. Couples the redox reaction to proton translocation (for every two electrons transferred, four hydrogen ions are translocated across the cytoplasmic membrane), and thus conserves the redox energy in a proton gradient. The sequence is that of NADH-quinone oxidoreductase subunit B from Nocardioides sp. (strain ATCC BAA-499 / JS614).